Consider the following 93-residue polypeptide: YcgL domain-containing protein VV1_0131 (93 aa).

Positions 1–84 (MLCSIYKSSK…PPENLLQQHK (84 aa)) constitute a YcgL domain. The tract at residues 72-93 (LPPPPENLLQQHKERKAQQKND) is disordered.

The polypeptide is YcgL domain-containing protein VV1_0131 (Vibrio vulnificus (strain CMCP6)).